Here is a 448-residue protein sequence, read N- to C-terminus: SVP1-like protein 2 (448 aa).

N-linked (GlcNAc...) asparagine glycosylation is found at asparagine 61, asparagine 155, asparagine 256, asparagine 280, asparagine 315, and asparagine 421. WD repeat units lie at residues 222 to 262 and 267 to 306; these read AHKN…LIKE and VDKADIYEMSFSPNGSKLAVLSNKQTLHIFQIFETTNTET. The disordered stretch occupies residues 416 to 435; it reads THYSLNESLRNEDTKSAGEP. Residues 424–435 are compositionally biased toward basic and acidic residues; sequence LRNEDTKSAGEP.

The protein belongs to the WD repeat PROPPIN family. Post-translationally, N-glycosylated.

The protein localises to the endosome membrane. Its subcellular location is the prevacuolar compartment membrane. Its function is as follows. Involved in piecemeal microautophagy of the nucleus (micronucleophagy). This is SVP1-like protein 2 (HSV2) from Saccharomyces cerevisiae (strain ATCC 204508 / S288c) (Baker's yeast).